A 748-amino-acid polypeptide reads, in one-letter code: Cytosolic phospholipase A2 (748 aa).

A phospholipid binding region spans residues 1-178; sequence MSFIDPYQHI…MRKLLGPKKS (178 aa). At Ser2 the chain carries Phosphoserine. One can recognise a C2 domain in the interval 6 to 122; the sequence is PYQHIIVEHQ…KVGEKKEVPF (117 aa). Ca(2+) is bound by residues Asp40, Thr41, Asp43, Asn65, Asp93, Ala94, and Asn95. The 602-residue stretch at 138-739 folds into the PLA2c domain; the sequence is VCSSPDLRFS…SNVEARRFFN (602 aa). The active-site Nucleophile is Ser228. Position 268 is a phosphothreonine (Thr268). A disordered region spans residues 428 to 458; it reads HIVSNDSSDSDDESQEPKGTEGEDAEREYQN. Ser434, Ser435, and Ser437 each carry phosphoserine. The segment covering 442 to 458 has biased composition (basic and acidic residues); that stretch reads QEPKGTEGEDAEREYQN. Ser505 carries the post-translational modification Phosphoserine; by MAPK. Ser514 is modified (phosphoserine). Residue Lys540 forms a Glycyl lysine isopeptide (Lys-Gly) (interchain with G-Cter in SUMO2) linkage. The Proton acceptor role is filled by Asp548. Lys605 is covalently cross-linked (Glycyl lysine isopeptide (Lys-Gly) (interchain with G-Cter in SUMO2)). Ser726 and Ser728 each carry phosphoserine.

In terms of assembly, interacts with KAT5. Post-translationally, phosphorylated at both Ser-505 and Ser-726 in response to mitogenic stimuli.

It is found in the cytoplasm. The protein resides in the golgi apparatus membrane. It localises to the nucleus envelope. It carries out the reaction a 1,2-diacyl-sn-glycero-3-phosphocholine + H2O = a 1-acyl-sn-glycero-3-phosphocholine + a fatty acid + H(+). It catalyses the reaction a 1-O-alkyl-2-acyl-sn-glycero-3-phosphocholine + H2O = a 1-O-alkyl-sn-glycero-3-phosphocholine + a fatty acid + H(+). The catalysed reaction is a 1-acyl-sn-glycero-3-phosphocholine + H2O = sn-glycerol 3-phosphocholine + a fatty acid + H(+). The enzyme catalyses 1-hexadecanoyl-2-(5Z,8Z,11Z,14Z-eicosatetraenoyl)-sn-glycero-3-phosphocholine + H2O = 1-hexadecanoyl-sn-glycero-3-phosphocholine + (5Z,8Z,11Z,14Z)-eicosatetraenoate + H(+). It carries out the reaction 1,2-di-(5Z,8Z,11Z,14Z-eicosatetraenoyl)-sn-glycero-3-phosphocholine + H2O = 1-(5Z,8Z,11Z,14Z-eicosatetraenoyl)-sn-glycero-3-phosphocholine + (5Z,8Z,11Z,14Z)-eicosatetraenoate + H(+). It catalyses the reaction 1-octadecanoyl-2-(5Z,8Z,11Z,14Z-eicosatetraenoyl)-sn-glycero-3-phosphocholine + H2O = 1-octadecanoyl-sn-glycero-3-phosphocholine + (5Z,8Z,11Z,14Z)-eicosatetraenoate + H(+). The catalysed reaction is 1-hexadecanoyl-2-(9Z,12Z-octadecadienoyl)-sn-glycero-3-phosphocholine + H2O = (9Z,12Z)-octadecadienoate + 1-hexadecanoyl-sn-glycero-3-phosphocholine + H(+). The enzyme catalyses 1-octadecanoyl-2-(9Z,12Z,15Z-octadecatrienoyl)-sn-glycero-3-phosphocholine + H2O = (9Z,12Z,15Z)-octadecatrienoate + 1-octadecanoyl-sn-glycero-3-phosphocholine + H(+). It carries out the reaction 1-(5Z,8Z,11Z,14Z-eicosatetraenoyl)-2-hexadecanoyl-sn-glycero-3-phosphocholine + H2O = 1-(5Z,8Z,11Z,14Z-eicosatetraenoyl)-sn-glycero-3-phosphocholine + hexadecanoate + H(+). It catalyses the reaction 1-O-hexadecyl-2-(5Z,8Z,11Z,14Z)-eicosatetraenoyl-sn-glycero-3-phosphocholine + H2O = 1-O-hexadecyl-sn-glycero-3-phosphocholine + (5Z,8Z,11Z,14Z)-eicosatetraenoate + H(+). The catalysed reaction is 1,2-di-(9Z-octadecenoyl)-sn-glycero-3-phospho-(1'-sn-glycerol) + H2O = 1-(9Z-octadecenoyl)-sn-glycero-3-phospho-(1'-sn-glycerol) + (9Z)-octadecenoate + H(+). The enzyme catalyses 1-octadecanoyl-2-(5Z,8Z,11Z,14Z-eicosatetraenoyl)-sn-glycero-3-phosphate + H2O = 1-octadecanoyl-sn-glycero-3-phosphate + (5Z,8Z,11Z,14Z)-eicosatetraenoate + H(+). It carries out the reaction 1-hexadecanoyl-sn-glycero-3-phosphocholine + H2O = sn-glycerol 3-phosphocholine + hexadecanoate + H(+). It catalyses the reaction 2-(prostaglandin E2)-sn-glycero-3-phosphoethanolamine + H2O = sn-glycero-3-phosphoethanolamine + prostaglandin E2 + H(+). The catalysed reaction is 2-[(15S)-hydroxy-(5Z,8Z,11Z,13E)-eicosatetraenoyl]-sn-glycero-3-phosphocholine + H2O = (15S)-hydroxy-(5Z,8Z,11Z,13E)-eicosatetraenoate + sn-glycerol 3-phosphocholine + H(+). The enzyme catalyses 2-[(15R)-hydroxy-(5Z,8Z,11Z,13E)-eicosatetraenoyl]-sn-glycero-3-phosphocholine + H2O = (15R)-hydroxy-(5Z,8Z,11Z,13E)-eicosatetraenoate + sn-glycerol 3-phosphocholine + H(+). It carries out the reaction 2-(prostaglandin E2)-sn-glycero-3-phosphocholine + H2O = prostaglandin E2 + sn-glycerol 3-phosphocholine + H(+). It catalyses the reaction 2-[(11R)-hydroxy-(5Z,8Z,12E,14Z)-eicosatetraenoyl]-sn-glycero-3-phosphocholine + H2O = (11R)-hydroxy-(5Z,8Z,12E,14Z)-eicosatetraenoate + sn-glycerol 3-phosphocholine + H(+). The catalysed reaction is 1-(5Z,8Z,11Z,14Z-eicosatetraenoyl)-2-O-hexadecyl-sn-glycero-3-phosphocholine + H2O = 2-O-hexadecyl-sn-glycero-3-phosphocholine + (5Z,8Z,11Z,14Z)-eicosatetraenoate + H(+). The enzyme catalyses 1-octadecanoyl-2-(5Z,8Z,11Z,14Z-eicosatetraenoyl)-sn-glycero-3-phosphocholine + glycerol = 1-(5Z,8Z,11Z,14Z-eicosatetraenoyl)-glycerol + 1-octadecanoyl-sn-glycero-3-phosphocholine. It carries out the reaction 1-octadecanoyl-2-(9Z,12Z,15Z-octadecatrienoyl)-sn-glycero-3-phosphocholine + glycerol = 1-(9Z,12Z,15Z-octadecatrienoyl)-glycerol + 1-octadecanoyl-sn-glycero-3-phosphocholine. Its pathway is membrane lipid metabolism; glycerophospholipid metabolism. It participates in lipid metabolism; arachidonate metabolism. It functions in the pathway lipid metabolism; prostaglandin biosynthesis. The protein operates within lipid metabolism; leukotriene B4 biosynthesis. Its activity is regulated as follows. Activated by cytosolic calcium, which is necessary for binding to membrane lipids. Activated by phosphorylation in response to mitogenic stimuli. In terms of biological role, has primarily calcium-dependent phospholipase and lysophospholipase activities, with a major role in membrane lipid remodeling and biosynthesis of lipid mediators of the inflammatory response. Plays an important role in embryo implantation and parturition through its ability to trigger prostanoid production. Preferentially hydrolyzes the ester bond of the fatty acyl group attached at sn-2 position of phospholipids (phospholipase A2 activity). Selectively hydrolyzes sn-2 arachidonoyl group from membrane phospholipids, providing the precursor for eicosanoid biosynthesis via the cyclooxygenase pathway. In an alternative pathway of eicosanoid biosynthesis, hydrolyzes sn-2 fatty acyl chain of eicosanoid lysophopholipids to release free bioactive eicosanoids. Hydrolyzes the ester bond of the fatty acyl group attached at sn-1 position of phospholipids (phospholipase A1 activity) only if an ether linkage rather than an ester linkage is present at the sn-2 position. This hydrolysis is not stereospecific. Has calcium-independent phospholipase A2 and lysophospholipase activities in the presence of phosphoinositides. Has O-acyltransferase activity. Catalyzes the transfer of fatty acyl chains from phospholipids to a primary hydroxyl group of glycerol (sn-1 or sn-3), potentially contributing to monoacylglycerol synthesis. The sequence is that of Cytosolic phospholipase A2 (PLA2G4A) from Oryctolagus cuniculus (Rabbit).